The chain runs to 507 residues: UDP-N-acetylhexosamine pyrophosphorylase-like protein 1 (507 aa).

The interval 56–91 (ACARPHGPPPDLAARLRPLPPERVGRASRSDPETRR) is disordered. Residues 78–91 (RVGRASRSDPETRR) show a composition bias toward basic and acidic residues. Residues 111–114 (LAGG) carry the Substrate binding motif. UTP-binding positions include 111–114 (LAGG), lysine 125, glutamine 199, and glycine 225. Asparagine 226 provides a ligand contact to substrate. Position 256 (aspartate 256) interacts with UTP. The Substrate binding motif lies at 306–307 (EY). A UTP-binding site is contributed by lysine 380. A substrate-binding site is contributed by lysine 410.

It belongs to the UDPGP type 1 family.

The sequence is that of UDP-N-acetylhexosamine pyrophosphorylase-like protein 1 (UAP1L1) from Homo sapiens (Human).